Here is a 113-residue protein sequence, read N- to C-terminus: Photosystem II reaction center Psb28 protein (113 aa).

The protein belongs to the Psb28 family. Part of the photosystem II complex.

It is found in the cellular thylakoid membrane. The chain is Photosystem II reaction center Psb28 protein from Prochlorococcus marinus (strain NATL2A).